Reading from the N-terminus, the 3088-residue chain is Protein prune homolog 2 (3088 aa).

Met1 carries the N-acetylmethionine modification. A DHH motif motif is present at residues 109 to 111 (GSS). 22 disordered regions span residues 433 to 468 (IRSSRSSKESSVFLSDDSPVGEGAGPHHTLLPGLDS), 490 to 628 (HFDL…EPAS), 673 to 759 (SSEQ…QGTN), 771 to 795 (SGRSPTAMPEPWGNPTDDGEPAAVA), 846 to 909 (SELL…PKTR), 952 to 1080 (SNLG…SSYD), 1192 to 1211 (SDEHTKDSAPSEHHTLNEKS), 1231 to 1371 (SFML…LVAS), 1413 to 1452 (RDVQTGMSADNLQPKDTHEKHLMSQRNSGETTETSDGMNF), 1472 to 1491 (LEPENVGGGPPHRVPRSLDF), 1515 to 1585 (VKGS…QESE), 1632 to 1698 (DSFS…EESI), 1741 to 1768 (LDSSEPAENENKSNPFCDNQQSSPDPWT), 1782 to 1813 (VEKEKRSSPETGTTGDVAWQISPKASFPKNED), 2089 to 2114 (ILTHCEHDSNSQASDSPDICHDSEAK), 2173 to 2215 (YQAD…PDMA), 2240 to 2260 (QEPTPEGDGSWISDSFSPESQ), 2492 to 2542 (SDLP…KNED), 2589 to 2667 (TQLA…SELG), 2687 to 2710 (ALEEASGPVSQSQKSKSRGRAGPD), 2814 to 2833 (QSEGSILSDDNLDSPDEIDI), and 2841 to 2875 (PDEADSFEYTGHDPTANKDSGQESESIPEYTAEEE). Residues 503 to 512 (SGQSQQSSHS) show a composition bias toward low complexity. Basic and acidic residues predominate over residues 562–582 (SLVEHDEEFVQRQDSPRDNSE). 2 stretches are compositionally biased toward polar residues: residues 613 to 625 (MNSLVESSPSTEE) and 673 to 684 (SSEQESVFQSPE). The span at 685–699 (SWKEHKPSSIDRRAS) shows a compositional bias: basic and acidic residues. The segment covering 750–759 (LPNTSPQGTN) has biased composition (polar residues). A compositionally biased stretch (polar residues) spans 846–857 (SELLDNSPSEIN). Basic and acidic residues predominate over residues 865 to 876 (WGKKNNDSRDHI). Positions 881 to 894 (NPSSDLDHTWTNSK) are enriched in polar residues. Residues 895 to 909 (PPKEDQNGLVDPKTR) show a composition bias toward basic and acidic residues. A compositionally biased stretch (low complexity) spans 964 to 977 (DTNYSTSDSYTSPT). Over residues 980–1000 (GDEKETEHKPFAKEEGFESKD) the composition is skewed to basic and acidic residues. Composition is skewed to polar residues over residues 1001 to 1027 (GNSTAEETDIPPQSLQQSSRNRISSGP) and 1037 to 1048 (HTDNSSEINTTH). Composition is skewed to basic and acidic residues over residues 1049 to 1062 (NLDENELKTEHTDG), 1192 to 1208 (SDEHTKDSAPSEHHTLN), 1282 to 1293 (HLDKQDTERETL), 1314 to 1339 (DPWKGHGDGQSESEKEAQGATDRGHL), and 1425 to 1434 (QPKDTHEKHL). Residues 1436–1450 (SQRNSGETTETSDGM) are compositionally biased toward polar residues. A compositionally biased stretch (polar residues) spans 1537 to 1585 (SSEYTHSSASSPELNDSSVALSSWGQQPSSGYQEENQGNWSEQNHQESE). Acidic residues predominate over residues 1687-1698 (SDDDSVGGEESI). Positions 1752-1768 (KSNPFCDNQQSSPDPWT) are enriched in polar residues. Composition is skewed to basic and acidic residues over residues 2516 to 2542 (EKTIPTKEPEQIKSEYKEERCTEKNED) and 2604 to 2622 (NERKGLSAEKMSSKSDTRS). Positions 2623-2632 (SFESPAQDQS) are enriched in polar residues. Over residues 2823–2833 (DNLDSPDEIDI) the composition is skewed to acidic residues. The CRAL-TRIO domain maps to 2895 to 3056 (DMKVIEPYRR…SIIKLDEELR (162 aa)).

This sequence belongs to the PPase class C family. Prune subfamily. A high level of expression seen in the nervous system (brain, cerebellum and spinal cord) as well as adrenal gland. Expressed at high levels in noneuroblastoma, rhabdomyosarcoma, melanoma and some osteosarcoma cell lines, whereas at only low levels in cancer cell lines of liver, breast, thyroid and colon. Expression is significantly higher in favorable tumors than aggressive ones.

The protein resides in the cytoplasm. Functionally, may play an important role in regulating differentiation, survival and aggressiveness of the tumor cells. This chain is Protein prune homolog 2 (PRUNE2), found in Homo sapiens (Human).